A 115-amino-acid chain; its full sequence is U3-lycotoxin-Ls1p (115 aa).

A signal peptide spans 1-20; it reads MKFVLLFGVLLVTLFSYSSA. Residues 21–44 constitute a propeptide that is removed on maturation; the sequence is EMFDDFDQADEDELLSLIEKEEAR. Cystine bridges form between Cys48-Cys63, Cys55-Cys72, Cys62-Cys87, and Cys74-Cys85.

The protein belongs to the neurotoxin 19 (CSTX) family. 01 subfamily. In terms of tissue distribution, expressed by the venom gland.

The protein resides in the secreted. This chain is U3-lycotoxin-Ls1p, found in Lycosa singoriensis (Wolf spider).